Consider the following 572-residue polypeptide: Urease subunit alpha (572 aa).

The region spanning 136-572 is the Urease domain; that stretch reads GGIDTHIHWI…VPLAQRYFLF (437 aa). Histidine 141, histidine 143, and lysine 224 together coordinate Ni(2+). An N6-carboxylysine modification is found at lysine 224. Histidine 226 contributes to the substrate binding site. The Ni(2+) site is built by histidine 253 and histidine 279. The active-site Proton donor is the histidine 327. Residue aspartate 367 coordinates Ni(2+).

The protein belongs to the metallo-dependent hydrolases superfamily. Urease alpha subunit family. Heterotrimer of UreA (gamma), UreB (beta) and UreC (alpha) subunits. Three heterotrimers associate to form the active enzyme. Requires Ni cation as cofactor. Post-translationally, carboxylation allows a single lysine to coordinate two nickel ions.

The protein localises to the cytoplasm. The enzyme catalyses urea + 2 H2O + H(+) = hydrogencarbonate + 2 NH4(+). The protein operates within nitrogen metabolism; urea degradation; CO(2) and NH(3) from urea (urease route): step 1/1. This Actinobacillus pleuropneumoniae serotype 3 (strain JL03) protein is Urease subunit alpha.